Here is a 255-residue protein sequence, read N- to C-terminus: Type III pantothenate kinase (255 aa).

Position 6-13 (6-13) interacts with ATP; that stretch reads DIGNTNIV. Position 107–110 (107–110) interacts with substrate; the sequence is GSDC. The active-site Proton acceptor is the D109. D129 lines the K(+) pocket. Position 132 (T132) interacts with ATP. T184 provides a ligand contact to substrate.

The protein belongs to the type III pantothenate kinase family. Homodimer. It depends on NH4(+) as a cofactor. K(+) is required as a cofactor.

The protein localises to the cytoplasm. It catalyses the reaction (R)-pantothenate + ATP = (R)-4'-phosphopantothenate + ADP + H(+). It participates in cofactor biosynthesis; coenzyme A biosynthesis; CoA from (R)-pantothenate: step 1/5. In terms of biological role, catalyzes the phosphorylation of pantothenate (Pan), the first step in CoA biosynthesis. This chain is Type III pantothenate kinase, found in Bifidobacterium longum subsp. infantis (strain ATCC 15697 / DSM 20088 / JCM 1222 / NCTC 11817 / S12).